The primary structure comprises 98 residues: Class II hydrophobin 5 (98 aa).

An N-terminal signal peptide occupies residues 1 to 17 (MQFSLALVTLLATAVSA). 4 cysteine pairs are disulfide-bonded: Cys30–Cys78, Cys39–Cys69, Cys40–Cys52, and Cys79–Cys90.

The protein belongs to the cerato-ulmin hydrophobin family.

It localises to the secreted. It is found in the cell wall. In terms of biological role, aerial growth, conidiation, and dispersal of filamentous fungi in the environment rely upon a capability of their secreting small amphipathic proteins called hydrophobins (HPBs) with low sequence identity. Class I can self-assemble into an outermost layer of rodlet bundles on aerial cell surfaces, conferring cellular hydrophobicity that supports fungal growth, development and dispersal; whereas Class II form highly ordered films at water-air interfaces through intermolecular interactions but contribute nothing to the rodlet structure. Does not seem to be important for the ability to cause seedling disease. The protein is Class II hydrophobin 5 of Gibberella moniliformis (Maize ear and stalk rot fungus).